We begin with the raw amino-acid sequence, 434 residues long: Eukaryotic translation initiation factor 3 subunit E-2 (434 aa).

The region spanning 219-392 (FFNHPKGRDL…GHVVMGTQPL (174 aa)) is the PCI domain.

The protein belongs to the eIF-3 subunit E family. As to quaternary structure, component of the eukaryotic translation initiation factor 3 (eIF-3) complex. The eIF-3 complex interacts with pix. Interacts with mxt.

The protein localises to the cytoplasm. Its function is as follows. Component of the eukaryotic translation initiation factor 3 (eIF-3) complex, which is involved in protein synthesis of a specialized repertoire of mRNAs and, together with other initiation factors, stimulates binding of mRNA and methionyl-tRNAi to the 40S ribosome. The eIF-3 complex specifically targets and initiates translation of a subset of mRNAs involved in cell proliferation. The chain is Eukaryotic translation initiation factor 3 subunit E-2 (eIF3-S6-2) from Drosophila willistoni (Fruit fly).